The chain runs to 255 residues: MLQISHLYADYGGKPALEDINLTLESGELLVVLGPSGCGKTTLLNLIAGFVPYQHGSIQLAGKGIQGPGAERGVVFQNEGLLPWRNVQDNVAFGLQLAGVEKMQRLEIAHQMVKKVGLEGAEKRYIWQLSGGQRQRVGIARALAANPQLLLLDEPFGALDAFTRDQIQTLLLKLWQETGKQVLLITHDIEEAVFMATELVLLSPGPGRVLERLPLNFARRFVAGESSRSIKSDPQFIAMREYVLSRVFEQREAFS.

In terms of domain architecture, ABC transporter spans leucine 2–serine 229. Position 34–41 (glycine 34–threonine 41) interacts with ATP.

Belongs to the ABC transporter superfamily. Taurine importer (TC 3.A.1.17.1) family. As to quaternary structure, the complex is composed of two ATP-binding proteins (TauB), two transmembrane proteins (TauC) and a solute-binding protein (TauA).

The protein localises to the cell inner membrane. The catalysed reaction is taurine(out) + ATP + H2O = taurine(in) + ADP + phosphate + H(+). Its function is as follows. Part of the ABC transporter complex TauABC involved in taurine import. Responsible for energy coupling to the transport system. This Escherichia coli O6:H1 (strain CFT073 / ATCC 700928 / UPEC) protein is Taurine import ATP-binding protein TauB.